The chain runs to 623 residues: ATP-dependent lipid A-core flippase (623 aa).

The next 5 membrane-spanning stretches (helical) occupy residues 66–86, 103–123, 190–210, 290–310, and 317–337; these read LVLA…LAVI, VWFL…CNFF, LVVI…TLII, LTPL…AVAL, and ALTV…FDPI. The ABC transmembrane type-1 domain maps to 67 to 349; it reads VLAVLLMAGA…LTNLAGKMQK (283 aa). The ABC transporter domain occupies 382–618; it reads VEFRAVSHRF…NGLYASLYNM (237 aa). 416–423 serves as a coordination point for ATP; sequence GRSGSGKT.

Belongs to the ABC transporter superfamily. Lipid exporter (TC 3.A.1.106) family. As to quaternary structure, homodimer.

The protein resides in the cell inner membrane. It catalyses the reaction ATP + H2O + lipid A-core oligosaccharideSide 1 = ADP + phosphate + lipid A-core oligosaccharideSide 2.. Its function is as follows. Involved in lipopolysaccharide (LPS) biosynthesis. Translocates lipid A-core from the inner to the outer leaflet of the inner membrane. Transmembrane domains (TMD) form a pore in the inner membrane and the ATP-binding domain (NBD) is responsible for energy generation. The polypeptide is ATP-dependent lipid A-core flippase (Bordetella pertussis (strain Tohama I / ATCC BAA-589 / NCTC 13251)).